We begin with the raw amino-acid sequence, 471 residues long: Putative multidrug resistance protein MdtD (471 aa).

A run of 13 helical transmembrane segments spans residues 12–32 (LWIV…VNTA), 49–69 (MIIV…GWLA), 77–97 (IFFT…QAST), 106–126 (VLQG…VMKI), 138–158 (FVTL…GVLV), 165–185 (WIFL…LCLM), 195–215 (FDLS…LALD), 220–240 (LGIS…ALLL), 263–283 (FSLG…LPFM), 286–306 (VFLQ…MIPM), 342–362 (LLFM…VLFL), 393–413 (LLSM…GLLL), and 431–451 (VFLY…LIFS).

The protein belongs to the major facilitator superfamily. TCR/Tet family.

The protein resides in the cell inner membrane. This Klebsiella pneumoniae (strain 342) protein is Putative multidrug resistance protein MdtD.